The primary structure comprises 119 residues: Toxin ICK-11 (119 aa).

The first 19 residues, 1–19, serve as a signal peptide directing secretion; sequence MMKLYSLVIIATLAAAAFA. 4 cysteine pairs are disulfide-bonded: Cys59–Cys74, Cys67–Cys80, Cys71–Cys116, and Cys73–Cys87.

The protein belongs to the neurotoxin 25 family. ICK-8 subfamily. As to expression, expressed by the venom gland.

It localises to the secreted. Functionally, ion channel inhibitor. This Trittame loki (Brush-footed trapdoor spider) protein is Toxin ICK-11.